Reading from the N-terminus, the 414-residue chain is Putative nickel insertion protein (414 aa).

Positions 70-91 (ATHHDHDHSQDQTHHHHADHAP) are disordered.

The protein belongs to the LarC family.

This is Putative nickel insertion protein from Picosynechococcus sp. (strain ATCC 27264 / PCC 7002 / PR-6) (Agmenellum quadruplicatum).